The following is a 210-amino-acid chain: 3-hexulose-6-phosphate synthase 3 (210 aa).

Belongs to the HPS/KGPDC family. HPS subfamily.

It carries out the reaction D-ribulose 5-phosphate + formaldehyde = D-arabino-hex-3-ulose 6-phosphate. It functions in the pathway one-carbon metabolism; formaldehyde assimilation via RuMP pathway; D-fructose 6-phosphate from D-ribulose 5-phosphate and formaldehyde: step 1/2. Its function is as follows. Catalyzes the condensation of ribulose 5-phosphate with formaldehyde to form 3-hexulose 6-phosphate. This is 3-hexulose-6-phosphate synthase 3 from Staphylococcus saprophyticus subsp. saprophyticus (strain ATCC 15305 / DSM 20229 / NCIMB 8711 / NCTC 7292 / S-41).